The primary structure comprises 390 residues: Centrosomal protein of 44 kDa (390 aa).

Residues 11–195 (RNLEQVLRLL…ISEDTLSPIT (185 aa)) are binds with microtubules and centrioles. Residues 233–267 (EITALQTMLAECQEKLKELTLIEKRLDCLEQKMKG) are a coiled coil. Residues 323–347 (KNKVGRPASIPLSSRYSTASSDSTP) are disordered. Phosphoserine is present on residues S331 and S345. A compositionally biased stretch (low complexity) spans 335-345 (SSRYSTASSDS). T346 carries the post-translational modification Phosphothreonine. Residues 361-385 (SEETTIQKMERMKKMFEETAELLKC) are a coiled coil.

In terms of assembly, interacts with CROCC. Interacts with POC1B; the interaction is direct and recruits POC1B to centriolar microtubules. Binds to centriolar microtubules.

The protein localises to the cytoplasm. Its subcellular location is the cytoskeleton. The protein resides in the microtubule organizing center. It localises to the centrosome. It is found in the centriole. The protein localises to the spindle pole. Its subcellular location is the midbody. Its function is as follows. Centriole-enriched microtubule-binding protein involved in centriole biogenesis. In collaboration with CEP295 and POC1B, is required for the centriole-to-centrosome conversion by ensuring the formation of bona fide centriole wall. Functions as a linker component that maintains centrosome cohesion. Associates with CROCC and regulates its stability and localization to the centrosome. In Macaca fascicularis (Crab-eating macaque), this protein is Centrosomal protein of 44 kDa (CEP44).